A 396-amino-acid polypeptide reads, in one-letter code: Activity-regulated cytoskeleton-associated protein (396 aa).

A coiled-coil region spans residues 54–78 (SKQVERELKGLHRSVGKLENNLDGY). The interval 89–100 (KSIKACLCRCQE) is interaction with SH3GL1 or SH3GL3. Residues 177-207 (PPAAGELPEQESVEAQQYQSWGPGEDGQPSP) form a disordered region. An interaction with DNM2 region spans residues 195 to 214 (QSWGPGEDGQPSPGVDTQIF). A Phosphoserine; by CaMK2 modification is found at serine 260. Residues lysine 268 and lysine 269 each participate in a glycyl lysine isopeptide (Lys-Gly) (interchain with G-Cter in ubiquitin) cross-link. Residue threonine 278 is modified to Phosphothreonine. Positions 356-396 (QDGLEQAAEPSGTPLPTEDETEALTPALTSESVASDRTQPE) are disordered. Polar residues predominate over residues 382–396 (ALTSESVASDRTQPE).

This sequence belongs to the ARC/ARG3.1 family. In terms of assembly, homooligomer; homooligomerizes into virion-like capsids. Interacts with SH3GL1/endophilin-2, SH3GL3/endophilin-3 and DNM2/DYN2. Interacts with CAMK2B (in the kinase inactive state); leading to target ARC to inactive synapses. Interacts with PSEN1. Interacts with GRIN2A and GRIN2B; inhibiting homooligomerization. In terms of processing, ubiquitinated by UBE3A, leading to its degradation by the proteasome, thereby promoting AMPA receptors (AMPARs) expression at synapses. Ubiquitinated by RNF216 at Lys-268 and Lys-269 limiting ARC protein levels induced by synaptic activity and thus regulating ARC-dependent forms of synaptic plasticity. Palmitoylation anchors the protein into the membrane by allowing direct insertion into the hydrophobic core of the lipid bilayer. Post-translationally, phosphorylation at Ser-260 by CaMK2 prevents homooligomerization into virion-like capsids by disrupting an interaction surface essential for high-order oligomerization. Phosphorylation by CaMK2 inhibits synaptic activity. Expressed in brain and testis. In primary visual cortex, detected in all cortical layers with the exception of layer 5: present at highest level in layers 2/3 and 4, the predominant sites of ocular dominance plasticity (at protein level). Also expressed in skin-migratory dendritic cells.

It localises to the extracellular vesicle membrane. It is found in the postsynaptic cell membrane. The protein resides in the synapse. The protein localises to the postsynaptic density. Its subcellular location is the early endosome membrane. It localises to the cell projection. It is found in the dendrite. The protein resides in the cytoplasm. The protein localises to the cytoskeleton. Its subcellular location is the cell cortex. It localises to the dendritic spine. It is found in the cytoplasmic vesicle. The protein resides in the secretory vesicle. The protein localises to the acrosome. Its subcellular location is the clathrin-coated vesicle membrane. In terms of biological role, master regulator of synaptic plasticity that self-assembles into virion-like capsids that encapsulate RNAs and mediate intercellular RNA transfer in the nervous system. ARC protein is released from neurons in extracellular vesicles that mediate the transfer of ARC mRNA into new target cells, where ARC mRNA can undergo activity-dependent translation. ARC capsids are endocytosed and are able to transfer ARC mRNA into the cytoplasm of neurons. Acts as a key regulator of synaptic plasticity: required for protein synthesis-dependent forms of long-term potentiation (LTP) and depression (LTD) and for the formation of long-term memory. Regulates synaptic plasticity by promoting endocytosis of AMPA receptors (AMPARs) in response to synaptic activity: this endocytic pathway maintains levels of surface AMPARs in response to chronic changes in neuronal activity through synaptic scaling, thereby contributing to neuronal homeostasis. Acts as a postsynaptic mediator of activity-dependent synapse elimination in the developing cerebellum by mediating elimination of surplus climbing fiber synapses. Accumulates at weaker synapses, probably to prevent their undesired enhancement. This suggests that ARC-containing virion-like capsids may be required to eliminate synaptic material. Required to transduce experience into long-lasting changes in visual cortex plasticity and for long-term memory. Involved in postsynaptic trafficking and processing of amyloid-beta A4 (APP) via interaction with PSEN1. In addition to its role in synapses, also involved in the regulation of the immune system: specifically expressed in skin-migratory dendritic cells and regulates fast dendritic cell migration, thereby regulating T-cell activation. The sequence is that of Activity-regulated cytoskeleton-associated protein from Mus musculus (Mouse).